We begin with the raw amino-acid sequence, 296 residues long: 4-hydroxybenzoate octaprenyltransferase (296 aa).

8 helical membrane passes run 28 to 48, 51 to 71, 102 to 122, 143 to 163, 174 to 194, 212 to 232, 233 to 253, and 274 to 294; these read IGTL…SDGI, LAVL…GCVI, LLLT…LNHL, FFPI…PMAF, AWIL…VYAM, FGRY…LLMA, VLGA…IVLL, and FLAN…HTFF.

This sequence belongs to the UbiA prenyltransferase family. Mg(2+) serves as cofactor.

The protein localises to the cell inner membrane. It catalyses the reaction all-trans-octaprenyl diphosphate + 4-hydroxybenzoate = 4-hydroxy-3-(all-trans-octaprenyl)benzoate + diphosphate. The protein operates within cofactor biosynthesis; ubiquinone biosynthesis. Its function is as follows. Catalyzes the prenylation of para-hydroxybenzoate (PHB) with an all-trans polyprenyl group. Mediates the second step in the final reaction sequence of ubiquinone-8 (UQ-8) biosynthesis, which is the condensation of the polyisoprenoid side chain with PHB, generating the first membrane-bound Q intermediate 3-octaprenyl-4-hydroxybenzoate. In Neisseria gonorrhoeae (strain NCCP11945), this protein is 4-hydroxybenzoate octaprenyltransferase.